Reading from the N-terminus, the 430-residue chain is Acylsugar acyltransferase 3 (430 aa).

Catalysis depends on proton acceptor residues His155 and Asp367.

It belongs to the plant acyltransferase family. Monomer. In terms of tissue distribution, expressed in tip cells of type I trichomes of stems and petioles, sites of acylsugars production.

Catalyzes the transfer of short (four to five carbons) branched acyl chains to the furanose ring of di-acylsucrose acceptors to produce tri-acylsucroses such as S3:15 (5,5,5), S4:17 (2,5,5,5) and S4:24 (2,5,5,12) acylsucroses. The chain is Acylsugar acyltransferase 3 from Solanum lycopersicum (Tomato).